The chain runs to 1178 residues: MLRMKLPLKPTHPAEPPPEAEEPEADARPGAKAPSRRRRDCRPPPPPPPPAGPSRGPLPPPPPPRGLGPPVAGGAAAGAGMPGGGGGPSAALREQERVYEWFGLVLGSAQRLEFMCGLLDLCNPLELRFLGSCLEDLARKDYHYLRDSEAKANGLSDPGPLADFREPAVRSRLIVYLALLGSENREAAGRLHRLLPQVDSVLKSLRAARGEGSRGGAEDERGEDGDGEQDAEKDGSGPEGGIVEPRVGGGLGSRAQEELLLLFTMASLHPAFSFHQRVTLREHLERLRAALRGGPEDAEVEVEPCKFAGPRAQNNSAHGDYMQNNESSLIEQAPIPQDGLTVAPHRAQREAVHIEKIMLKGVQRKRADKYWEYTFKVNWSDLSVTTVTKTHQELQEFLLKLPKELSSETFDKTILRALNQGSLKREERRHPDLEPILRQLFSSSSQAFLQSQKVHSFFQSISSDSLHSINNLQSSLKTSKILEHLKEDSSEASSQEEDVLQHAIIHKKHTGKSPIVNNIGTSCSPLDGLTMQYSEQNGIVDWRKQSCTTIQHPEHCVTSADQHSAEKRSLSSINKKKGKPQTEKEKIKKTDNRLNSRINGIRLSTPQHAHGGTVKDVNLDIGSGHDTCGETSSESYSSPSSPRHDGRESFESEEEKDRDTDSNSEDSGNPSTTRFTGYGSVNQTVTVKPPVQIASLGNENGNLLEDPLNSPKYQHISFMPTLHCVMHNGAQKSEVVVPAPKPADGKTIGMLVPSPVAISAIRESANSTPVGILGPTACTGESEKHLELLASPLPIPSTFLPHSSTPALHLTVQRLKLPPPQGSSESCTVNIPQQPPGSLSIASPNTAFIPIHNPGSFPGSPVATTDPITKSASQVVGLNQMVPQIEGNTGTVPQPTNVKVVLPAAGLSAAQPPASYPLPGSPLAAGVLPSQNSSVLSTAATSPQPASAGISQAQATVPPAVPTHTPGPAPSPSPALTHSTAQSDSTSYISAVGNTNANGTVVPPQQMGSGPCGSCGRRCSCGTNGNLQLNSYYYPNPMPGPMYRVPSFFTLPSICNGSYLNQAHQSNGNQLPFFLPQTPYANGLVHDPVMGSQANYGMQQMAGFGRFYPVYPAPNVVANTSGSGPKKNGNVSCYNCGVSGHYAQDCKQSSMEANQQGTYRLRYAPPLPPSNDTLDSAD.

Disordered stretches follow at residues 1 to 90 (MLRM…GPSA), 207 to 249 (AARG…RVGG), 557 to 683 (VTSA…SVNQ), and 936 to 986 (LSTA…SDST). The span at 43–67 (PPPPPPPPAGPSRGPLPPPPPPRGL) shows a compositional bias: pro residues. Over residues 75 to 88 (AAAGAGMPGGGGGP) the composition is skewed to gly residues. Positions 208 to 219 (ARGEGSRGGAED) are enriched in basic and acidic residues. A compositionally biased stretch (acidic residues) spans 220–229 (ERGEDGDGEQ). The residue at position 236 (serine 236) is a Phosphoserine. Residues 580-594 (PQTEKEKIKKTDNRL) are compositionally biased toward basic and acidic residues. A compositionally biased stretch (polar residues) spans 595 to 607 (NSRINGIRLSTPQ). The segment covering 632 to 641 (SSESYSSPSS) has biased composition (low complexity). The segment covering 642–661 (PRHDGRESFESEEEKDRDTD) has biased composition (basic and acidic residues). The span at 665 to 683 (EDSGNPSTTRFTGYGSVNQ) shows a compositional bias: polar residues. A compositionally biased stretch (low complexity) spans 937–948 (STAATSPQPASA). A compositionally biased stretch (pro residues) spans 959–973 (PAVPTHTPGPAPSPS). Residues 974 to 986 (PALTHSTAQSDST) are compositionally biased toward polar residues. The CCHC-type zinc finger occupies 1131–1148 (VSCYNCGVSGHYAQDCKQ).

This Homo sapiens (Human) protein is Zinc finger CCHC domain-containing protein 2.